We begin with the raw amino-acid sequence, 264 residues long: S-adenosylmethionine decarboxylase proenzyme (264 aa).

The Schiff-base intermediate with substrate; via pyruvic acid role is filled by serine 113. Serine 113 carries the pyruvic acid (Ser); by autocatalysis modification. The active-site Proton acceptor; for processing activity is the histidine 118. Cysteine 141 (proton donor; for catalytic activity) is an active-site residue.

It belongs to the prokaryotic AdoMetDC family. Type 2 subfamily. In terms of assembly, heterooctamer of four alpha and four beta chains arranged as a tetramer of alpha/beta heterodimers. Pyruvate serves as cofactor. Is synthesized initially as an inactive proenzyme. Formation of the active enzyme involves a self-maturation process in which the active site pyruvoyl group is generated from an internal serine residue via an autocatalytic post-translational modification. Two non-identical subunits are generated from the proenzyme in this reaction, and the pyruvate is formed at the N-terminus of the alpha chain, which is derived from the carboxyl end of the proenzyme. The post-translation cleavage follows an unusual pathway, termed non-hydrolytic serinolysis, in which the side chain hydroxyl group of the serine supplies its oxygen atom to form the C-terminus of the beta chain, while the remainder of the serine residue undergoes an oxidative deamination to produce ammonia and the pyruvoyl group blocking the N-terminus of the alpha chain.

The enzyme catalyses S-adenosyl-L-methionine + H(+) = S-adenosyl 3-(methylsulfanyl)propylamine + CO2. The protein operates within amine and polyamine biosynthesis; S-adenosylmethioninamine biosynthesis; S-adenosylmethioninamine from S-adenosyl-L-methionine: step 1/1. Catalyzes the decarboxylation of S-adenosylmethionine to S-adenosylmethioninamine (dcAdoMet), the propylamine donor required for the synthesis of the polyamines spermine and spermidine from the diamine putrescine. The polypeptide is S-adenosylmethionine decarboxylase proenzyme (Pseudomonas aeruginosa (strain ATCC 15692 / DSM 22644 / CIP 104116 / JCM 14847 / LMG 12228 / 1C / PRS 101 / PAO1)).